A 289-amino-acid chain; its full sequence is Phycobilisome 39 kDa linker polypeptide, phycocyanin-associated, rod (289 aa).

The region spanning 2 to 180 (PITSAASRLG…LYRGYANSDR (179 aa)) is the PBS-linker domain. The segment at 213-233 (SYLPSKQGTAPSRTFGRSSQG) is disordered. The span at 216-233 (PSKQGTAPSRTFGRSSQG) shows a compositional bias: polar residues. The region spanning 236–288 (PRLYRIEVTGISLPRYPKVRRSNKEFIVPYEQLSSTLQQINKLGGKVASITFA) is the CpcD-like domain.

The protein belongs to the phycobilisome linker protein family.

The protein resides in the cellular thylakoid membrane. Functionally, rod linker protein, associated with phycocyanin. Linker polypeptides determine the state of aggregation and the location of the disk-shaped phycobiliprotein units within the phycobilisome and modulate their spectroscopic properties in order to mediate a directed and optimal energy transfer. In Microchaete diplosiphon (Fremyella diplosiphon), this protein is Phycobilisome 39 kDa linker polypeptide, phycocyanin-associated, rod (cpcI2).